Reading from the N-terminus, the 556-residue chain is Neurofilament light polypeptide (556 aa).

Residue Ser2 is modified to N-acetylserine. A head region spans residues 2-94; sequence SSYGYDPFFP…KSIRSQERAQ (93 aa). One can recognise an IF rod domain in the interval 91–402; that stretch reads ERAQLQDLND…KLLEGEETRL (312 aa). The interval 95 to 126 is coil 1A; it reads LQDLNDRFACFIERVHELEQQNKVLEAELLVL. The linker 1 stretch occupies residues 127-139; the sequence is RQKHAEPSRFRAL. Residues 140-235 form a coil 1B region; that stretch reads YEQEIRELRL…KVHEEELAEL (96 aa). The segment at 236 to 254 is linker 12; that stretch reads QAQIQYAHLSVEMDVSAKP. A coil 2A region spans residues 255–273; it reads DLSAALRDIRAQYEKLAAR. Positions 274–282 are linker 2; that stretch reads NMQNAEEWF. The interval 283 to 398 is coil 2B; the sequence is RSRFTVLSES…AAYRKLLEGE (116 aa). Residues 399 to 445 are tail, subdomain A; the sequence is ETRLSFTSVGSITSGYTQTAPTFGRSAYSGLQSTSYLMTTRSFPTYY. The interval 399-556 is tail; that stretch reads ETRLSFTSVG…KEETEVKKKA (158 aa). The segment at 446–556 is tail, subdomain B (acidic); it reads SSHVQEEQIE…KEETEVKKKA (111 aa). The span at 464 to 473 shows a compositional bias: low complexity; that stretch reads KAGEAKAAPA. Residues 464 to 556 form a disordered region; the sequence is KAGEAKAAPA…KEETEVKKKA (93 aa). Over residues 474–540 the composition is skewed to acidic residues; sequence EEGEEEEKEE…AEETGEEEKE (67 aa). Residues 541-556 show a composition bias toward basic and acidic residues; the sequence is EKEAAGKEETEVKKKA.

This sequence belongs to the intermediate filament family. Forms homodimers (in vitro).

The protein localises to the cell projection. The protein resides in the axon. Its subcellular location is the cytoplasm. It is found in the cytoskeleton. Its function is as follows. Neurofilaments usually contain three intermediate filament proteins: NEFL, NEFM, and NEFH which are involved in the maintenance of neuronal caliber. May additionally cooperate with the neuronal intermediate filament proteins to form neuronal filamentous networks. This is Neurofilament light polypeptide (NEFL) from Coturnix japonica (Japanese quail).